We begin with the raw amino-acid sequence, 497 residues long: Cytosol aminopeptidase (497 aa).

Residues K267 and D272 each coordinate Mn(2+). Residue K279 is part of the active site. Residues D290, D349, and E351 each coordinate Mn(2+). Residue R353 is part of the active site.

It belongs to the peptidase M17 family. Mn(2+) serves as cofactor.

Its subcellular location is the cytoplasm. It catalyses the reaction Release of an N-terminal amino acid, Xaa-|-Yaa-, in which Xaa is preferably Leu, but may be other amino acids including Pro although not Arg or Lys, and Yaa may be Pro. Amino acid amides and methyl esters are also readily hydrolyzed, but rates on arylamides are exceedingly low.. The enzyme catalyses Release of an N-terminal amino acid, preferentially leucine, but not glutamic or aspartic acids.. Presumably involved in the processing and regular turnover of intracellular proteins. Catalyzes the removal of unsubstituted N-terminal amino acids from various peptides. The chain is Cytosol aminopeptidase (pepA) from Pseudomonas putida (Arthrobacter siderocapsulatus).